A 34-amino-acid polypeptide reads, in one-letter code: Phalloidin proprotein (34 aa).

A propeptide spanning residues 1–10 (MSDINASRLP) is cleaved from the precursor. A cross-link (cyclopeptide (Ala-Pro)) is located at residues 11-17 (AWLATCP). Residues 12–16 (WLATC) constitute a cross-link (2'-cysteinyl-6'-hydroxytryptophan sulfoxide (Trp-Cys)). Residues 18 to 34 (CVGDDVNPTLSRGESLC) constitute a propeptide that is removed on maturation.

Belongs to the MSDIN fungal toxin family. In terms of processing, processed by the macrocyclase-peptidase enzyme POPB to yield a toxic cyclic heptapeptide. POPB first removes 10 residues from the N-terminus. Conformational trapping of the remaining peptide forces the enzyme to release this intermediate rather than proceed to macrocyclization. The enzyme rebinds the remaining peptide in a different conformation and catalyzes macrocyclization of the N-terminal 7 residues.

Functionally, toxin that belongs to the bicyclic heptapeptides called phallotoxins. Although structurally related to amatoxins, phallotoxins have a different mode of action, which is the stabilization of F-actin. Phallotoxins are poisonous when administered parenterally, but not orally because of poor absorption. The polypeptide is Phalloidin proprotein (Amanita phalloides (Death cap)).